Reading from the N-terminus, the 423-residue chain is UPF0229 protein VP0986 (423 aa).

The tract at residues 69-112 (GGVRERVHPGNDQFITGDKIERPKGGGQGSGSGEGNASPDGEGQ) is disordered. A compositionally biased stretch (gly residues) spans 93 to 102 (GGGQGSGSGE).

The protein belongs to the UPF0229 family.

The sequence is that of UPF0229 protein VP0986 from Vibrio parahaemolyticus serotype O3:K6 (strain RIMD 2210633).